We begin with the raw amino-acid sequence, 150 residues long: Large ribosomal subunit protein bL9 (150 aa).

The protein belongs to the bacterial ribosomal protein bL9 family.

Functionally, binds to the 23S rRNA. The sequence is that of Large ribosomal subunit protein bL9 from Streptococcus pyogenes serotype M3 (strain SSI-1).